Reading from the N-terminus, the 877-residue chain is Phosphoenolpyruvate carboxylase (877 aa).

Active-site residues include His138 and Lys544.

The protein belongs to the PEPCase type 1 family. Requires Mg(2+) as cofactor.

It carries out the reaction oxaloacetate + phosphate = phosphoenolpyruvate + hydrogencarbonate. Its function is as follows. Forms oxaloacetate, a four-carbon dicarboxylic acid source for the tricarboxylic acid cycle. This Vibrio vulnificus (strain YJ016) protein is Phosphoenolpyruvate carboxylase.